Reading from the N-terminus, the 483-residue chain is Betaine aldehyde dehydrogenase (483 aa).

The K(+) site is built by I27 and D93. 149–151 (GAW) lines the NAD(+) pocket. The active-site Charge relay system is the K161. 175–178 (KPSE) is an NAD(+) binding site. A K(+)-binding site is contributed by V179. 228 to 231 (SVPT) serves as a coordination point for NAD(+). Residue V243 coordinates K(+). The active-site Proton acceptor is E249. NAD(+) is bound by residues G251, C283, and E380. Residue C283 is the Nucleophile of the active site. The residue at position 283 (C283) is a Cysteine sulfenic acid (-SOH). K450 and G453 together coordinate K(+). Residue E457 is the Charge relay system of the active site.

The protein belongs to the aldehyde dehydrogenase family. As to quaternary structure, dimer of dimers. It depends on K(+) as a cofactor.

The catalysed reaction is betaine aldehyde + NAD(+) + H2O = glycine betaine + NADH + 2 H(+). It participates in amine and polyamine biosynthesis; betaine biosynthesis via choline pathway; betaine from betaine aldehyde: step 1/1. Involved in the biosynthesis of the osmoprotectant glycine betaine. Catalyzes the irreversible oxidation of betaine aldehyde to the corresponding acid. This is Betaine aldehyde dehydrogenase from Cereibacter sphaeroides (strain ATCC 17029 / ATH 2.4.9) (Rhodobacter sphaeroides).